Here is a 1064-residue protein sequence, read N- to C-terminus: Carbamoyl phosphate synthase pyrimidine-specific large chain (1064 aa).

Positions 1–401 (MPKRRDIETI…SLLKAVRSLE (401 aa)) are carboxyphosphate synthetic domain. ATP-binding residues include Arg-129, Arg-169, Gly-175, Gly-176, Arg-208, Ile-210, Gly-241, Ile-242, His-243, Gln-284, and Glu-298. Residues 133–327 (RALMNELGEP…IAKLAAKIAV (195 aa)) form the ATP-grasp 1 domain. The Mg(2+) site is built by Gln-284, Glu-298, and Asn-300. The Mn(2+) site is built by Gln-284, Glu-298, and Asn-300. Residues 402 to 546 (IGVHHLELNE…YSTYEEENES (145 aa)) form an oligomerization domain region. The carbamoyl phosphate synthetic domain stretch occupies residues 547 to 929 (IVTEKPSVIV…ALYKGLVASG (383 aa)). Residues 671 to 861 (EQALSELGIP…MANLATKAIL (191 aa)) enclose the ATP-grasp 2 domain. ATP is bound by residues Arg-707, Arg-746, Ile-748, Glu-752, Gly-777, Val-778, His-779, Ser-780, Gln-820, and Glu-832. Mg(2+) is bound by residues Gln-820, Glu-832, and Asn-834. Mn(2+) contacts are provided by Gln-820, Glu-832, and Asn-834. Positions 930–1064 (IQIQPHGAVL…TAMTEGLVRS (135 aa)) constitute an MGS-like domain. The interval 930–1064 (IQIQPHGAVL…TAMTEGLVRS (135 aa)) is allosteric domain.

The protein belongs to the CarB family. As to quaternary structure, composed of two chains; the small (or glutamine) chain promotes the hydrolysis of glutamine to ammonia, which is used by the large (or ammonia) chain to synthesize carbamoyl phosphate. Tetramer of heterodimers (alpha,beta)4. Mg(2+) is required as a cofactor. Requires Mn(2+) as cofactor.

The enzyme catalyses hydrogencarbonate + L-glutamine + 2 ATP + H2O = carbamoyl phosphate + L-glutamate + 2 ADP + phosphate + 2 H(+). It carries out the reaction hydrogencarbonate + NH4(+) + 2 ATP = carbamoyl phosphate + 2 ADP + phosphate + 2 H(+). Its pathway is amino-acid biosynthesis; L-arginine biosynthesis; carbamoyl phosphate from bicarbonate: step 1/1. It functions in the pathway pyrimidine metabolism; UMP biosynthesis via de novo pathway; (S)-dihydroorotate from bicarbonate: step 1/3. Functionally, small subunit of the glutamine-dependent carbamoyl phosphate synthetase (CPSase). CPSase catalyzes the formation of carbamoyl phosphate from the ammonia moiety of glutamine, carbonate, and phosphate donated by ATP, constituting the first step of the biosynthetic pathway leading to pyrimidine nucleotides. The large subunit (synthetase) binds the substrates ammonia (free or transferred from glutamine from the small subunit), hydrogencarbonate and ATP and carries out an ATP-coupled ligase reaction, activating hydrogencarbonate by forming carboxy phosphate which reacts with ammonia to form carbamoyl phosphate. In Geobacillus stearothermophilus (Bacillus stearothermophilus), this protein is Carbamoyl phosphate synthase pyrimidine-specific large chain (pyrAB).